Reading from the N-terminus, the 343-residue chain is Heat-inducible transcription repressor HrcA (343 aa).

The protein belongs to the HrcA family.

Negative regulator of class I heat shock genes (grpE-dnaK-dnaJ and groELS operons). Prevents heat-shock induction of these operons. This chain is Heat-inducible transcription repressor HrcA, found in Halalkalibacterium halodurans (strain ATCC BAA-125 / DSM 18197 / FERM 7344 / JCM 9153 / C-125) (Bacillus halodurans).